A 158-amino-acid polypeptide reads, in one-letter code: UPF0262 protein RHOS4_22360 (158 aa).

Belongs to the UPF0262 family.

The polypeptide is UPF0262 protein RHOS4_22360 (Cereibacter sphaeroides (strain ATCC 17023 / DSM 158 / JCM 6121 / CCUG 31486 / LMG 2827 / NBRC 12203 / NCIMB 8253 / ATH 2.4.1.) (Rhodobacter sphaeroides)).